The primary structure comprises 191 residues: MPDALPPCSILILAGGRGQRMGGRDKGLVDWQGEPLIAHVHRVVRPLSDDLVISCNRNQAAYRPYADRLVGDAEADFPGPLAGVIAGLRVARHGWVVVLACDAPLVDRELIEGLLRLAVTGNSAAMVRQGGFWQPMFSVLPKRVLPVLEQAWAAGERSLQKALLREAVQGLECAESDRRLSNFNSPDRLQD.

GTP contacts are provided by residues leucine 13–glycine 15, lysine 26, aspartate 72, and aspartate 102. Mg(2+) is bound at residue aspartate 102.

Belongs to the MobA family. As to quaternary structure, monomer. Mg(2+) is required as a cofactor.

Its subcellular location is the cytoplasm. The catalysed reaction is Mo-molybdopterin + GTP + H(+) = Mo-molybdopterin guanine dinucleotide + diphosphate. Functionally, transfers a GMP moiety from GTP to Mo-molybdopterin (Mo-MPT) cofactor (Moco or molybdenum cofactor) to form Mo-molybdopterin guanine dinucleotide (Mo-MGD) cofactor. The sequence is that of Molybdenum cofactor guanylyltransferase from Pseudomonas putida (Arthrobacter siderocapsulatus).